Consider the following 155-residue polypeptide: Small ribosomal subunit protein uS9 (155 aa).

It belongs to the universal ribosomal protein uS9 family.

The protein is Small ribosomal subunit protein uS9 of Allorhizobium ampelinum (strain ATCC BAA-846 / DSM 112012 / S4) (Agrobacterium vitis (strain S4)).